The primary structure comprises 742 residues: Vesicle-fusing ATPase (742 aa).

ATP-binding positions include 499–504 (NGMVDC) and 539–546 (SGSGKTAL). Residue Thr544 coordinates Mg(2+).

This sequence belongs to the AAA ATPase family. As to quaternary structure, homohexamer. Binds to SNARE-SNAP complexes to form 20S particles. Requires Mg(2+) as cofactor.

Its subcellular location is the cytoplasm. It catalyses the reaction ATP + H2O = ADP + phosphate + H(+). In terms of biological role, required for vesicle-mediated transport. Catalyzes the fusion of transport vesicles within the Golgi cisternae. Is also required for transport from the endoplasmic reticulum to the Golgi stack. Seems to function as a fusion protein required for the delivery of cargo proteins to all compartments of the Golgi stack independent of vesicle origin. Required for maintaining the normal morphology of the Golgi apparatus. The protein is Vesicle-fusing ATPase of Arabidopsis thaliana (Mouse-ear cress).